The chain runs to 218 residues: MDKSESTGAGRNRRRRPRRGSRSAPSSADANFRVLSQQLSRLNKTLAAGRPTINHPTFVGSERCKPGYTFTSITLKPPKIDRESYYGKRLLLPDSVTEYDKKLVSRIQIRVNPLPKFDSTVWVTVRKVPASSDLSVAAISAMFADGASPVLVYQYAASGVQANNKLLYDLSAMRADIGDMRKYAVLVYSKDDTLETDELVLHVDVEHQRIPTSGVLPV.

N-acetylmethionine; by host is present on Met-1. A disordered region spans residues 1–28 (MDKSESTGAGRNRRRRPRRGSRSAPSSA). Basic residues predominate over residues 11-21 (RNRRRRPRRGS).

The protein belongs to the cucumovirus capsid protein family.

The protein resides in the virion. In terms of biological role, capsid protein. Probably binds RNA and plays a role in packaging. The polypeptide is Capsid protein (Cucumis sativus (Cucumber)).